Reading from the N-terminus, the 947-residue chain is Bifunctional glutamine synthetase adenylyltransferase/adenylyl-removing enzyme (947 aa).

The tract at residues 1-440 (MTPLSSPLSQ…VFNELIGDDE (440 aa)) is adenylyl removase. The segment at 450 to 947 (SEPWREVWQD…ASWRKWLVAV (498 aa)) is adenylyl transferase.

This sequence belongs to the GlnE family. It depends on Mg(2+) as a cofactor.

It carries out the reaction [glutamine synthetase]-O(4)-(5'-adenylyl)-L-tyrosine + phosphate = [glutamine synthetase]-L-tyrosine + ADP. The enzyme catalyses [glutamine synthetase]-L-tyrosine + ATP = [glutamine synthetase]-O(4)-(5'-adenylyl)-L-tyrosine + diphosphate. Involved in the regulation of glutamine synthetase GlnA, a key enzyme in the process to assimilate ammonia. When cellular nitrogen levels are high, the C-terminal adenylyl transferase (AT) inactivates GlnA by covalent transfer of an adenylyl group from ATP to specific tyrosine residue of GlnA, thus reducing its activity. Conversely, when nitrogen levels are low, the N-terminal adenylyl removase (AR) activates GlnA by removing the adenylyl group by phosphorolysis, increasing its activity. The regulatory region of GlnE binds the signal transduction protein PII (GlnB) which indicates the nitrogen status of the cell. This Salmonella heidelberg (strain SL476) protein is Bifunctional glutamine synthetase adenylyltransferase/adenylyl-removing enzyme.